A 1379-amino-acid chain; its full sequence is DNA-directed RNA polymerase subunit beta'' (1379 aa).

Residues cysteine 220, cysteine 293, cysteine 300, and cysteine 303 each coordinate Zn(2+).

This sequence belongs to the RNA polymerase beta' chain family. RpoC2 subfamily. As to quaternary structure, in plastids the minimal PEP RNA polymerase catalytic core is composed of four subunits: alpha, beta, beta', and beta''. When a (nuclear-encoded) sigma factor is associated with the core the holoenzyme is formed, which can initiate transcription. Zn(2+) serves as cofactor.

Its subcellular location is the plastid. The protein localises to the chloroplast. The enzyme catalyses RNA(n) + a ribonucleoside 5'-triphosphate = RNA(n+1) + diphosphate. Its function is as follows. DNA-dependent RNA polymerase catalyzes the transcription of DNA into RNA using the four ribonucleoside triphosphates as substrates. The polypeptide is DNA-directed RNA polymerase subunit beta'' (Olimarabidopsis pumila (Dwarf rocket)).